The following is a 39-amino-acid chain: Cytochrome b559 subunit beta (39 aa).

The helical transmembrane segment at 14 to 30 threads the bilayer; sequence WLAVHGLAIPTVFFLGS. Histidine 18 is a heme binding site.

Belongs to the PsbE/PsbF family. In terms of assembly, heterodimer of an alpha subunit and a beta subunit. PSII is composed of 1 copy each of membrane proteins PsbA, PsbB, PsbC, PsbD, PsbE, PsbF, PsbH, PsbI, PsbJ, PsbK, PsbL, PsbM, PsbT, PsbX, PsbY, PsbZ, Psb30/Ycf12, at least 3 peripheral proteins of the oxygen-evolving complex and a large number of cofactors. It forms dimeric complexes. It depends on heme b as a cofactor.

It is found in the plastid membrane. Functionally, this b-type cytochrome is tightly associated with the reaction center of photosystem II (PSII). PSII is a light-driven water:plastoquinone oxidoreductase that uses light energy to abstract electrons from H(2)O, generating O(2) and a proton gradient subsequently used for ATP formation. It consists of a core antenna complex that captures photons, and an electron transfer chain that converts photonic excitation into a charge separation. This chain is Cytochrome b559 subunit beta, found in Cuscuta gronovii (Common dodder).